Here is a 320-residue protein sequence, read N- to C-terminus: Cytochrome f (320 aa).

The N-terminal stretch at 1 to 35 (MKLNSLINLIQKSIYSCTLLLIILNIICVAPNSSN) is a signal peptide. Residues phenylalanine 37, cysteine 57, cysteine 60, and histidine 61 each coordinate heme. The helical transmembrane segment at 286 to 306 (IKGMIVFFFASVLAQIFFVLK) threads the bilayer.

Belongs to the cytochrome f family. In terms of assembly, the 4 large subunits of the cytochrome b6-f complex are cytochrome b6, subunit IV (17 kDa polypeptide, petD), cytochrome f and the Rieske protein, while the 4 small subunits are PetG, PetL, PetM and PetN. The complex functions as a dimer. Requires heme as cofactor.

It localises to the plastid. Its subcellular location is the chloroplast thylakoid membrane. In terms of biological role, component of the cytochrome b6-f complex, which mediates electron transfer between photosystem II (PSII) and photosystem I (PSI), cyclic electron flow around PSI, and state transitions. The chain is Cytochrome f from Pyropia yezoensis (Susabi-nori).